The sequence spans 454 residues: Protein odr-4 homolog (454 aa).

2 helical membrane passes run 82–102 (MLPGGLLVLGVFIITTLELAN) and 432–452 (IGVIAAFTVAVLAAGISFHYF).

Belongs to the ODR-4 family. Ubiquitously expressed.

The protein localises to the membrane. In terms of biological role, may play a role in the trafficking of a subset of G-protein coupled receptors. This chain is Protein odr-4 homolog, found in Homo sapiens (Human).